A 156-amino-acid polypeptide reads, in one-letter code: MPRRREVPKREVLPDSRYNSELVAKFVNVIMRDGKKSVAEGILYDAFDIMEERTKEAPLEIFEKAINNIKPVIEVKSRRVGGSTYQIPMEVRANRRTALAMKWIMTYSRSRSEKKMSAKLAGELLDAYNNRGASIKKKEDTHRMAEANKAFAHYRW.

It belongs to the universal ribosomal protein uS7 family. As to quaternary structure, part of the 30S ribosomal subunit. Contacts proteins S9 and S11.

One of the primary rRNA binding proteins, it binds directly to 16S rRNA where it nucleates assembly of the head domain of the 30S subunit. Is located at the subunit interface close to the decoding center, probably blocks exit of the E-site tRNA. In Desulfatibacillum aliphaticivorans, this protein is Small ribosomal subunit protein uS7.